Consider the following 212-residue polypeptide: Small ribosomal subunit protein uS19m (212 aa).

The N-terminal 29 residues, 1-29 (MAFCTKLGGHWKQGVNVPVSSMLGSLRYM), are a transit peptide targeting the mitochondrion. Residues 31–109 (TKLYIGGLSP…FNISVNVAKD (79 aa)) enclose the RRM domain.

The protein belongs to the universal ribosomal protein uS19 family. In terms of assembly, component of the mitochondrial ribosome small subunit.

The protein localises to the mitochondrion. In terms of biological role, the RNA-binding domain found in RPS19 may functionally replace the missing mitochondrial RPS13. The chain is Small ribosomal subunit protein uS19m (RPS19) from Arabidopsis thaliana (Mouse-ear cress).